Consider the following 94-residue polypeptide: Large ribosomal subunit protein uL23 (94 aa).

The protein belongs to the universal ribosomal protein uL23 family. In terms of assembly, part of the 50S ribosomal subunit. Contacts protein L29, and trigger factor when it is bound to the ribosome.

One of the early assembly proteins it binds 23S rRNA. One of the proteins that surrounds the polypeptide exit tunnel on the outside of the ribosome. Forms the main docking site for trigger factor binding to the ribosome. The protein is Large ribosomal subunit protein uL23 of Ligilactobacillus salivarius (strain UCC118) (Lactobacillus salivarius).